The primary structure comprises 382 residues: uncharacterized protein (382 aa).

Transmembrane regions (helical) follow at residues 14 to 34 (GLLLLTLAIAVLNTLVLLWLA), 45 to 65 (MVSSSYFTGNLVGTLFTGYLI), 75 to 95 (YLASLIFAAGCVGLGVMVGFW), 102 to 122 (FIAGIGCAMIWVVVESALMCS), 131 to 151 (LLAAYMMVYYMGTFLGQLLVS), 157 to 177 (LLHVLPWVTGMILAGILPLLF), 204 to 224 (LGVNGCIISGIVLGSLYGLMP), 231 to 251 (GMANASIGFWMAVLVSAGILG), 270 to 290 (VQVFVVILGSIAMLTQAAMAP), 291 to 311 (ALFILGAAGFTLYPVAMAWAC), 325 to 345 (ALLLSYTVGSLLGPSFAAMLM), and 349 to 369 (SDNLLFIMIASVSFIYLLMLL).

It belongs to the major facilitator superfamily. YcaD (TC 2.A.1.26) family.

The protein localises to the cell inner membrane. This is an uncharacterized protein from Salmonella paratyphi A (strain ATCC 9150 / SARB42).